Reading from the N-terminus, the 213-residue chain is Protein Syd (213 aa).

This sequence belongs to the Syd family.

It localises to the cell inner membrane. Interacts with the SecY protein in vivo. May bind preferentially to an uncomplexed state of SecY, thus functioning either as a chelating agent for excess SecY in the cell or as a regulatory factor that negatively controls the translocase function. The protein is Protein Syd of Shewanella pealeana (strain ATCC 700345 / ANG-SQ1).